The sequence spans 473 residues: Kynurenine 3-monooxygenase (473 aa).

The protein belongs to the aromatic-ring hydroxylase family. KMO subfamily. FAD serves as cofactor.

Its subcellular location is the mitochondrion outer membrane. It carries out the reaction L-kynurenine + NADPH + O2 + H(+) = 3-hydroxy-L-kynurenine + NADP(+) + H2O. The protein operates within cofactor biosynthesis; NAD(+) biosynthesis; quinolinate from L-kynurenine: step 1/3. Catalyzes the hydroxylation of L-kynurenine (L-Kyn) to form 3-hydroxy-L-kynurenine (L-3OHKyn). Required for synthesis of quinolinic acid. The chain is Kynurenine 3-monooxygenase from Debaryomyces hansenii (strain ATCC 36239 / CBS 767 / BCRC 21394 / JCM 1990 / NBRC 0083 / IGC 2968) (Yeast).